Here is a 120-residue protein sequence, read N- to C-terminus: Large ribosomal subunit protein bL12 (120 aa).

Belongs to the bacterial ribosomal protein bL12 family. Homodimer. Part of the ribosomal stalk of the 50S ribosomal subunit. Forms a multimeric L10(L12)X complex, where L10 forms an elongated spine to which 2 to 4 L12 dimers bind in a sequential fashion. Binds GTP-bound translation factors.

Functionally, forms part of the ribosomal stalk which helps the ribosome interact with GTP-bound translation factors. Is thus essential for accurate translation. This chain is Large ribosomal subunit protein bL12, found in Listeria welshimeri serovar 6b (strain ATCC 35897 / DSM 20650 / CCUG 15529 / CIP 8149 / NCTC 11857 / SLCC 5334 / V8).